Here is a 293-residue protein sequence, read N- to C-terminus: tRNA pseudouridine synthase B (293 aa).

Asp-38 functions as the Nucleophile in the catalytic mechanism.

This sequence belongs to the pseudouridine synthase TruB family. Type 1 subfamily.

The enzyme catalyses uridine(55) in tRNA = pseudouridine(55) in tRNA. In terms of biological role, responsible for synthesis of pseudouridine from uracil-55 in the psi GC loop of transfer RNAs. The sequence is that of tRNA pseudouridine synthase B from Trichormus variabilis (strain ATCC 29413 / PCC 7937) (Anabaena variabilis).